A 114-amino-acid chain; its full sequence is Histone H3-5 (114 aa).

The tract at residues 1–29 is disordered; that stretch reads NTGAKAPRKQLANKAARKSTNVNAVSGVK.

The protein belongs to the histone H3 family. In terms of assembly, the nucleosome is a histone octamer containing two molecules each of H2A, H2B, H3 and H4 assembled in one H3-H4 heterotetramer and two H2A-H2B heterodimers. The octamer wraps approximately 147 bp of DNA.

The protein localises to the nucleus. Its subcellular location is the chromosome. In terms of biological role, core component of nucleosome. Nucleosomes wrap and compact DNA into chromatin, limiting DNA accessibility to the cellular machineries which require DNA as a template. Histones thereby play a central role in transcription regulation, DNA repair, DNA replication and chromosomal stability. DNA accessibility is regulated via a complex set of post-translational modifications of histones, also called histone code, and nucleosome remodeling. In Stylonychia lemnae (Ciliate), this protein is Histone H3-5 (H3-5).